The chain runs to 502 residues: MFTLPQKEFRMTTACPGSDSIQDLPSNKGDGLERECSRKPDQKLLKFYGVGDPAAELSSSSPYLSSRGSVIKWFWDSAEEGYRTYHMDEYDEDKNPSGIINLGTSENKLCFDLLSRRLSQSDMLQVEPALLQYPDWRGHLFLREEVARFLSFYCRSPAPLKPENVVVLNGCASLFSALATVLCEAGEAFLIPAPYYGAITQHVYLYGNVRLVCVYLDSEVTGLETRPFQLTVEKLEMALQGANSEGVKVKGLILINPQNPLGDIYSPGELQEYLEFAKRHELHVMVDEVYMLSVFEESAGYRSVLSLERLPDPQRTHVMWATSKDFGMSGLRFGTLYTENWAVATAVASLCRYHGLSGLVQYQMAQLLRDHDWINQVYLPENHARLKAAHTYVSEDLRALGIPFVSRGAGFFIWVDLRKYLPEATFEEEVLLWRRFLENKVLLSFGKAFECKEPGWFRLVFSDKTHRLHLGMQRVRQVLEGQPQLADGAPPHQIQEPQGPHR.

Residues 15–35 (CPGSDSIQDLPSNKGDGLERE) are disordered. Glu106 is a substrate binding site. Lys324 carries the post-translational modification N6-(pyridoxal phosphate)lysine.

The protein belongs to the class-I pyridoxal-phosphate-dependent aminotransferase family.

Functionally, does not catalyze the synthesis of 1-aminocyclopropane-1-carboxylate but is capable of catalyzing the deamination of L-vinylglycine. In Bos taurus (Bovine), this protein is 1-aminocyclopropane-1-carboxylate synthase-like protein 1 (ACCS).